A 141-amino-acid chain; its full sequence is Large ribosomal subunit protein uL11 (141 aa).

This sequence belongs to the universal ribosomal protein uL11 family. Part of the ribosomal stalk of the 50S ribosomal subunit. Interacts with L10 and the large rRNA to form the base of the stalk. L10 forms an elongated spine to which L12 dimers bind in a sequential fashion forming a multimeric L10(L12)X complex. In terms of processing, one or more lysine residues are methylated.

Functionally, forms part of the ribosomal stalk which helps the ribosome interact with GTP-bound translation factors. This is Large ribosomal subunit protein uL11 from Chlamydia trachomatis serovar A (strain ATCC VR-571B / DSM 19440 / HAR-13).